The chain runs to 98 residues: MPSISTNIILAFTTALLGTLIYRSHLMSSLLCLEGMMLSMFILTSLTTLNLHFSLTTMAPIILLVFAACEAAIGLALLVMVSNTYGMDYIQNLNLLQC.

3 helical membrane-spanning segments follow: residues 1–21 (MPSISTNIILAFTTALLGTLI), 26–46 (LMSSLLCLEGMMLSMFILTSL), and 61–81 (IILLVFAACEAAIGLALLVMV).

Belongs to the complex I subunit 4L family. In terms of assembly, core subunit of respiratory chain NADH dehydrogenase (Complex I) which is composed of 45 different subunits.

It localises to the mitochondrion inner membrane. The catalysed reaction is a ubiquinone + NADH + 5 H(+)(in) = a ubiquinol + NAD(+) + 4 H(+)(out). Functionally, core subunit of the mitochondrial membrane respiratory chain NADH dehydrogenase (Complex I) which catalyzes electron transfer from NADH through the respiratory chain, using ubiquinone as an electron acceptor. Part of the enzyme membrane arm which is embedded in the lipid bilayer and involved in proton translocation. The sequence is that of NADH-ubiquinone oxidoreductase chain 4L (MT-ND4L) from Otolemur crassicaudatus (Brown greater galago).